The sequence spans 391 residues: Probable acridone synthase 3 (391 aa).

C164 is an active-site residue.

Belongs to the thiolase-like superfamily. Chalcone/stilbene synthases family.

The catalysed reaction is N-methylanthraniloyl-CoA + 3 malonyl-CoA + 3 H(+) = 1,3-dihydroxy-N-methylacridone + 3 CO2 + 4 CoA + H2O. The protein is Probable acridone synthase 3 (ACS3) of Ruta graveolens (Common rue).